The chain runs to 140 residues: Nucleoside diphosphate kinase (140 aa).

K9, F57, R85, T91, R102, and N112 together coordinate ATP. The active-site Pros-phosphohistidine intermediate is the H115.

The protein belongs to the NDK family. As to quaternary structure, homotetramer. Mg(2+) is required as a cofactor.

Its subcellular location is the cytoplasm. It carries out the reaction a 2'-deoxyribonucleoside 5'-diphosphate + ATP = a 2'-deoxyribonucleoside 5'-triphosphate + ADP. The catalysed reaction is a ribonucleoside 5'-diphosphate + ATP = a ribonucleoside 5'-triphosphate + ADP. In terms of biological role, major role in the synthesis of nucleoside triphosphates other than ATP. The ATP gamma phosphate is transferred to the NDP beta phosphate via a ping-pong mechanism, using a phosphorylated active-site intermediate. This is Nucleoside diphosphate kinase from Chlorobium luteolum (strain DSM 273 / BCRC 81028 / 2530) (Pelodictyon luteolum).